A 410-amino-acid polypeptide reads, in one-letter code: Tryptophan synthase beta chain (410 aa).

Residue Lys-104 is modified to N6-(pyridoxal phosphate)lysine.

It belongs to the TrpB family. Tetramer of two alpha and two beta chains. Requires pyridoxal 5'-phosphate as cofactor.

It carries out the reaction (1S,2R)-1-C-(indol-3-yl)glycerol 3-phosphate + L-serine = D-glyceraldehyde 3-phosphate + L-tryptophan + H2O. The protein operates within amino-acid biosynthesis; L-tryptophan biosynthesis; L-tryptophan from chorismate: step 5/5. Its function is as follows. The beta subunit is responsible for the synthesis of L-tryptophan from indole and L-serine. The chain is Tryptophan synthase beta chain from Thermosynechococcus vestitus (strain NIES-2133 / IAM M-273 / BP-1).